A 186-amino-acid chain; its full sequence is Elongation factor P (186 aa).

Belongs to the elongation factor P family.

The protein resides in the cytoplasm. It participates in protein biosynthesis; polypeptide chain elongation. Involved in peptide bond synthesis. Stimulates efficient translation and peptide-bond synthesis on native or reconstituted 70S ribosomes in vitro. Probably functions indirectly by altering the affinity of the ribosome for aminoacyl-tRNA, thus increasing their reactivity as acceptors for peptidyl transferase. The chain is Elongation factor P from Prochlorococcus marinus (strain MIT 9303).